Consider the following 205-residue polypeptide: Holliday junction branch migration complex subunit RuvA (205 aa).

Residues 1–64 are domain I; it reads MIGRLRGLLV…EDAQLLYGFI (64 aa). The interval 65–143 is domain II; sequence TKQERALFRL…SLMEASAGSE (79 aa). Residues 144 to 156 are flexible linker; the sequence is REFMLKSNYTPAP. Positions 157 to 205 are domain III; sequence VINTAEEDAIAALLSLGYKPAQASKAVSAVYQDGMDSETLIKSSLKSML.

It belongs to the RuvA family. In terms of assembly, homotetramer. Forms an RuvA(8)-RuvB(12)-Holliday junction (HJ) complex. HJ DNA is sandwiched between 2 RuvA tetramers; dsDNA enters through RuvA and exits via RuvB. An RuvB hexamer assembles on each DNA strand where it exits the tetramer. Each RuvB hexamer is contacted by two RuvA subunits (via domain III) on 2 adjacent RuvB subunits; this complex drives branch migration. In the full resolvosome a probable DNA-RuvA(4)-RuvB(12)-RuvC(2) complex forms which resolves the HJ.

The protein resides in the cytoplasm. Functionally, the RuvA-RuvB-RuvC complex processes Holliday junction (HJ) DNA during genetic recombination and DNA repair, while the RuvA-RuvB complex plays an important role in the rescue of blocked DNA replication forks via replication fork reversal (RFR). RuvA specifically binds to HJ cruciform DNA, conferring on it an open structure. The RuvB hexamer acts as an ATP-dependent pump, pulling dsDNA into and through the RuvAB complex. HJ branch migration allows RuvC to scan DNA until it finds its consensus sequence, where it cleaves and resolves the cruciform DNA. The protein is Holliday junction branch migration complex subunit RuvA of Shewanella sediminis (strain HAW-EB3).